Consider the following 84-residue polypeptide: Putative antitoxin VapB37 (84 aa).

Probable antitoxin component of a type II toxin-antitoxin (TA) system. Its putative cognate toxin is VapC37. This chain is Putative antitoxin VapB37 (vapB37), found in Mycobacterium tuberculosis (strain CDC 1551 / Oshkosh).